The following is a 450-amino-acid chain: Serine incorporator 2 (450 aa).

11 helical membrane passes run 5–27 (LGAC…ILCG), 40–57 (LLFT…IIML), 96–118 (AVYR…MICV), 131–150 (GFWF…AFYI), 160–182 (FYFG…VDFA), 203–225 (AGLF…LMFV), 238–257 (VFIS…AVLP), 264–286 (PNSG…WSAL), 315–337 (VWWD…FISL), 380–402 (TYSY…MTLT), and 417–439 (WTSV…WTLV).

Belongs to the TDE1 family.

Its subcellular location is the cell membrane. It carries out the reaction a 1,2-diacyl-sn-glycero-3-phospho-L-serine(in) = a 1,2-diacyl-sn-glycero-3-phospho-L-serine(out). The catalysed reaction is a 1,2-diacyl-sn-glycero-3-phosphocholine(in) = a 1,2-diacyl-sn-glycero-3-phosphocholine(out). The enzyme catalyses a 1,2-diacyl-sn-glycero-3-phosphoethanolamine(in) = a 1,2-diacyl-sn-glycero-3-phosphoethanolamine(out). Non-ATP-dependent, non-specific lipid transporter for phosphatidylserine, phosphatidylcholine, and phosphatidylethanolamine. Functions as a scramblase that flips lipids in both directions across the membrane. In contrast to SERINC3 and SERINC5, has no effect on gammaretrovirus particles infectivity. In Mus musculus (Mouse), this protein is Serine incorporator 2 (Serinc2).